The sequence spans 283 residues: uncharacterized protein (283 aa).

Residue Gly-2 is the site of N-myristoyl glycine; by host attachment. Residues Asn-31, Asn-95, Asn-105, Asn-108, Asn-137, and Asn-147 are each glycosylated (N-linked (GlcNAc...) asparagine; by host). 2 helical membrane-spanning segments follow: residues 181–201 and 250–270; these read IIAAIIIIVIIAVIIGAVVYF and FIVLLIMVLIIVILLKTLDIP. N-linked (GlcNAc...) asparagine; by host glycosylation occurs at Asn-277.

The protein localises to the membrane. This is an uncharacterized protein from Acanthamoeba polyphaga (Amoeba).